The sequence spans 768 residues: Ribosomal RNA large subunit methyltransferase K/L (768 aa).

One can recognise a THUMP domain in the interval Asp60–Leu175.

Belongs to the methyltransferase superfamily. RlmKL family.

The protein localises to the cytoplasm. It carries out the reaction guanosine(2445) in 23S rRNA + S-adenosyl-L-methionine = N(2)-methylguanosine(2445) in 23S rRNA + S-adenosyl-L-homocysteine + H(+). It catalyses the reaction guanosine(2069) in 23S rRNA + S-adenosyl-L-methionine = N(2)-methylguanosine(2069) in 23S rRNA + S-adenosyl-L-homocysteine + H(+). Its function is as follows. Specifically methylates the guanine in position 2445 (m2G2445) and the guanine in position 2069 (m7G2069) of 23S rRNA. The chain is Ribosomal RNA large subunit methyltransferase K/L from Psychrobacter arcticus (strain DSM 17307 / VKM B-2377 / 273-4).